The primary structure comprises 2579 residues: Ectopic P granules protein 5 homolog (2579 aa).

2 disordered regions span residues 1–46 and 92–132; these read MAEA…SREQ and NEES…GTKV. The span at 7–23 shows a compositional bias: basic residues; that stretch reads PQRRAKAKASRTKTKEK. Residues 24-34 are compositionally biased toward basic and acidic residues; it reads KKYETPQREES. Thr134 is modified (phosphothreonine). The interval 535 to 564 is disordered; it reads PSERKPSSSGPGSGTWTLVDEGGEEDEDPE. The segment covering 555–564 has biased composition (acidic residues); it reads EGGEEDEDPE. A coiled-coil region spans residues 1607–1633; sequence MHKNEAISQQLHVLRKEVKQLQAEAAK.

Belongs to the EPG5 family. As to quaternary structure, interacts with RAN.

It is found in the cytoplasm. Its subcellular location is the perinuclear region. The protein localises to the lysosome. In terms of biological role, involved in autophagy. May play a role in a late step of autophagy, such as clearance of autophagosomal cargo. Plays a key role in innate and adaptive immune response triggered by unmethylated cytidine-phosphate-guanosine (CpG) dinucleotides from pathogens, and mediated by the nucleotide-sensing receptor TLR9. It is necessary for the translocation of CpG dinucleotides from early endosomes to late endosomes and lysosomes, where TLR9 is located. The protein is Ectopic P granules protein 5 homolog (EPG5) of Homo sapiens (Human).